A 79-amino-acid polypeptide reads, in one-letter code: Acyl carrier protein (79 aa).

Residues 2–77 (SDVAERVKKI…DAVNFLEKAT (76 aa)) form the Carrier domain. S37 carries the post-translational modification O-(pantetheine 4'-phosphoryl)serine.

This sequence belongs to the acyl carrier protein (ACP) family. 4'-phosphopantetheine is transferred from CoA to a specific serine of apo-ACP by AcpS. This modification is essential for activity because fatty acids are bound in thioester linkage to the sulfhydryl of the prosthetic group.

The protein resides in the cytoplasm. Its pathway is lipid metabolism; fatty acid biosynthesis. Carrier of the growing fatty acid chain in fatty acid biosynthesis. The polypeptide is Acyl carrier protein (Methylocella silvestris (strain DSM 15510 / CIP 108128 / LMG 27833 / NCIMB 13906 / BL2)).